We begin with the raw amino-acid sequence, 306 residues long: Light-independent protochlorophyllide reductase iron-sulfur ATP-binding protein (306 aa).

The segment at 1-31 is disordered; that stretch reads MREAAGLEARGLKSPPILKGQDGEGSLQVHQ. Residues 50-55 and lysine 79 contribute to the ATP site; that span reads GIGKST. Serine 54 provides a ligand contact to Mg(2+). The [4Fe-4S] cluster site is built by cysteine 135 and cysteine 169. 220–221 contributes to the ATP binding site; sequence NR.

It belongs to the NifH/BchL/ChlL family. As to quaternary structure, homodimer. Protochlorophyllide reductase is composed of three subunits; BchL, BchN and BchB. It depends on [4Fe-4S] cluster as a cofactor.

It catalyses the reaction chlorophyllide a + oxidized 2[4Fe-4S]-[ferredoxin] + 2 ADP + 2 phosphate = protochlorophyllide a + reduced 2[4Fe-4S]-[ferredoxin] + 2 ATP + 2 H2O. It participates in porphyrin-containing compound metabolism; bacteriochlorophyll biosynthesis (light-independent). Functionally, component of the dark-operative protochlorophyllide reductase (DPOR) that uses Mg-ATP and reduced ferredoxin to reduce ring D of protochlorophyllide (Pchlide) to form chlorophyllide a (Chlide). This reaction is light-independent. The L component serves as a unique electron donor to the NB-component of the complex, and binds Mg-ATP. This chain is Light-independent protochlorophyllide reductase iron-sulfur ATP-binding protein, found in Jannaschia sp. (strain CCS1).